Consider the following 310-residue polypeptide: Putative type II methyltransferase M.MJ0563P (310 aa).

Residues 1–310 (MNVIDLFSGC…AIAKEIKKQL (310 aa)) form the SAM-dependent MTase C5-type domain. Cysteine 77 is an active-site residue.

It belongs to the class I-like SAM-binding methyltransferase superfamily. C5-methyltransferase family.

The catalysed reaction is a 2'-deoxycytidine in DNA + S-adenosyl-L-methionine = a 5-methyl-2'-deoxycytidine in DNA + S-adenosyl-L-homocysteine + H(+). A putative methylase that may protect DNA from cleavage by an unknown endonuclease. The protein is Putative type II methyltransferase M.MJ0563P of Methanocaldococcus jannaschii (strain ATCC 43067 / DSM 2661 / JAL-1 / JCM 10045 / NBRC 100440) (Methanococcus jannaschii).